We begin with the raw amino-acid sequence, 141 residues long: MWLQNLLFLGIVVYSLSAPTRSPITVTRPWKHVEAIKEALNLLDDMPVTLNEEVEVVSNEFSFKKLTCVQTRLKIFEQGLRGNFTKLKGALNMTASYYQTYCPPTPETDCETQVTTYADFIDSLKTFLTDIPFECKKPGQK.

The signal sequence occupies residues 1-17 (MWLQNLLFLGIVVYSLS). The O-linked (GalNAc...) serine glycan is linked to S22. An O-linked (GalNAc...) threonine glycan is attached at T27. 2 cysteine pairs are disulfide-bonded: C68–C110 and C102–C135. N-linked (GlcNAc...) asparagine glycans are attached at residues N83 and N92.

Belongs to the GM-CSF family. As to quaternary structure, monomer. The signaling GM-CSF receptor complex is a dodecamer of two head-to-head hexamers of two alpha, two beta, and two ligand subunits.

It is found in the secreted. Cytokine that stimulates the growth and differentiation of hematopoietic precursor cells from various lineages, including granulocytes, macrophages, eosinophils and erythrocytes. The protein is Granulocyte-macrophage colony-stimulating factor (Csf2) of Mus musculus (Mouse).